Consider the following 311-residue polypeptide: Porphobilinogen deaminase (311 aa).

At C243 the chain carries S-(dipyrrolylmethanemethyl)cysteine.

It belongs to the HMBS family. In terms of assembly, monomer. Dipyrromethane serves as cofactor.

It catalyses the reaction 4 porphobilinogen + H2O = hydroxymethylbilane + 4 NH4(+). It participates in porphyrin-containing compound metabolism; protoporphyrin-IX biosynthesis; coproporphyrinogen-III from 5-aminolevulinate: step 2/4. In terms of biological role, tetrapolymerization of the monopyrrole PBG into the hydroxymethylbilane pre-uroporphyrinogen in several discrete steps. The chain is Porphobilinogen deaminase from Aliivibrio fischeri (strain ATCC 700601 / ES114) (Vibrio fischeri).